The sequence spans 85 residues: MIYTDPATGATTNTDAAGNNYLNRLTPNTFLIILAVVVIVALIIIFMQSSSNGNNSSSPAAVPQMGFPLNTTMRANPFVATPQRL.

The protein localises to the virion membrane. Functionally, component of the polyhedra envelope. The sequence is that of Occlusion-derived virus envelope protein E18 from Orgyia pseudotsugata (Douglas-fir tussock moth).